The primary structure comprises 171 residues: Adenine phosphoribosyltransferase (171 aa).

The protein belongs to the purine/pyrimidine phosphoribosyltransferase family. Homodimer.

The protein resides in the cytoplasm. It catalyses the reaction AMP + diphosphate = 5-phospho-alpha-D-ribose 1-diphosphate + adenine. It functions in the pathway purine metabolism; AMP biosynthesis via salvage pathway; AMP from adenine: step 1/1. Functionally, catalyzes a salvage reaction resulting in the formation of AMP, that is energically less costly than de novo synthesis. The sequence is that of Adenine phosphoribosyltransferase from Nitrosococcus oceani (strain ATCC 19707 / BCRC 17464 / JCM 30415 / NCIMB 11848 / C-107).